Here is a 1222-residue protein sequence, read N- to C-terminus: ATP-dependent helicase/nuclease subunit A (1222 aa).

Residues Gln39 to Gln495 form the UvrD-like helicase ATP-binding domain. Ala60–Thr67 contributes to the ATP binding site. The UvrD-like helicase C-terminal domain occupies Gln524–Gly810.

Belongs to the helicase family. AddA subfamily. In terms of assembly, heterodimer of AddA and AddB/RexB. The cofactor is Mg(2+).

The catalysed reaction is Couples ATP hydrolysis with the unwinding of duplex DNA by translocating in the 3'-5' direction.. It carries out the reaction ATP + H2O = ADP + phosphate + H(+). The heterodimer acts as both an ATP-dependent DNA helicase and an ATP-dependent, dual-direction single-stranded exonuclease. Recognizes the chi site generating a DNA molecule suitable for the initiation of homologous recombination. The AddA nuclease domain is required for chi fragment generation; this subunit has the helicase and 3' -&gt; 5' nuclease activities. In Streptococcus pyogenes serotype M18 (strain MGAS8232), this protein is ATP-dependent helicase/nuclease subunit A.